Consider the following 335-residue polypeptide: Endo-1,4-beta-xylanase S20 (335 aa).

An N-terminal signal peptide occupies residues 1–22 (MLRKLVTGALAAALLLSGQSNA). Residues 39-241 (NNKNETGNGN…GSGYVDFTYA (203 aa)) form the GH11 domain. 2 N-linked (GlcNAc...) asparagine glycosylation sites follow: Asn42 and Asn78. Glu134 acts as the Nucleophile in catalysis. Asn202 carries N-linked (GlcNAc...) asparagine glycosylation. Catalysis depends on Glu228, which acts as the Proton donor. An N-linked (GlcNAc...) asparagine glycan is attached at Asn251. Residues 251–291 (NASAPSNNNNNNNNNNDNNGNWNNWNNNNNNNNNNNNNNNN) form a disordered region. Positions 257-291 (NNNNNNNNNNDNNGNWNNWNNNNNNNNNNNNNNNN) are enriched in low complexity. In terms of domain architecture, CBM1 spans 300-335 (NCAAIWGQCGGSGYNGPKCCKQGSCKQINQWYSQCQ).

It belongs to the glycosyl hydrolase 11 (cellulase G) family.

It localises to the secreted. It carries out the reaction Endohydrolysis of (1-&gt;4)-beta-D-xylosidic linkages in xylans.. The protein operates within glycan degradation; xylan degradation. Its function is as follows. Endo-1,4-beta-xylanase involved in the hydrolysis of xylan, a major structural heterogeneous polysaccharide found in plant biomass representing the second most abundant polysaccharide in the biosphere, after cellulose. The protein is Endo-1,4-beta-xylanase S20 (xynS20) of Neocallimastix patriciarum (Rumen fungus).